Here is a 255-residue protein sequence, read N- to C-terminus: uncharacterized protein (255 aa).

This sequence belongs to the methyltransferase superfamily.

This is an uncharacterized protein from Mycolicibacterium gilvum (strain PYR-GCK) (Mycobacterium gilvum (strain PYR-GCK)).